A 1296-amino-acid chain; its full sequence is Protein ORF75 (1296 aa).

The protein localises to the virion tegument. This Homo sapiens (Human) protein is Protein ORF75 (ORF75).